Consider the following 177-residue polypeptide: Hypoxanthine phosphoribosyltransferase (177 aa).

Diphosphate is bound by residues arginine 43 and glycine 44. Glutamate 99 provides a ligand contact to GMP. Glutamate 99 serves as a coordination point for IMP. 2 residues coordinate Mg(2+): glutamate 99 and aspartate 100. The active-site Proton acceptor is aspartate 103. GMP-binding positions include 103–108 (DSGKTL), lysine 131, and aspartate 159. Residues 103–108 (DSGKTL) and lysine 131 each bind IMP. Arginine 165 contributes to the diphosphate binding site.

This sequence belongs to the purine/pyrimidine phosphoribosyltransferase family. In terms of assembly, homotetramer. Mg(2+) is required as a cofactor.

The protein localises to the cytoplasm. It carries out the reaction IMP + diphosphate = hypoxanthine + 5-phospho-alpha-D-ribose 1-diphosphate. The enzyme catalyses GMP + diphosphate = guanine + 5-phospho-alpha-D-ribose 1-diphosphate. Its pathway is purine metabolism; IMP biosynthesis via salvage pathway; IMP from hypoxanthine: step 1/1. In terms of biological role, purine salvage pathway enzyme which catalyzes the transfer of the ribosyl-5-phosphate group from 5-phospho-alpha-D-ribose 1-diphosphate (PRPP) to the N9 position of hypoxanthine to yield IMP (inosine 5'-monophosphate). To a lesser extent, can also act on guanine leading to GMP, but shows a highly less efficient activity with xanthine. This chain is Hypoxanthine phosphoribosyltransferase (hpt), found in Buchnera aphidicola subsp. Schizaphis graminum (strain Sg).